The sequence spans 272 residues: Shikimate dehydrogenase (NADP(+)) (272 aa).

Residues 14 to 16 (SKS) and Thr-61 contribute to the shikimate site. Lys-65 serves as the catalytic Proton acceptor. The shikimate site is built by Asn-86 and Asp-102. NADP(+)-binding positions include 126–130 (GAGGA), 149–154 (NRTFSK), Ser-189, and Met-213. Shikimate is bound at residue Tyr-215. Residue Gly-238 coordinates NADP(+).

Belongs to the shikimate dehydrogenase family. In terms of assembly, homodimer.

It carries out the reaction shikimate + NADP(+) = 3-dehydroshikimate + NADPH + H(+). The protein operates within metabolic intermediate biosynthesis; chorismate biosynthesis; chorismate from D-erythrose 4-phosphate and phosphoenolpyruvate: step 4/7. In terms of biological role, involved in the biosynthesis of the chorismate, which leads to the biosynthesis of aromatic amino acids. Catalyzes the reversible NADPH linked reduction of 3-dehydroshikimate (DHSA) to yield shikimate (SA). The protein is Shikimate dehydrogenase (NADP(+)) of Haemophilus influenzae (strain ATCC 51907 / DSM 11121 / KW20 / Rd).